Reading from the N-terminus, the 264-residue chain is 3-methyl-2-oxobutanoate hydroxymethyltransferase (264 aa).

Mg(2+)-binding residues include Asp45 and Asp84. 3-methyl-2-oxobutanoate contacts are provided by residues 45 to 46 (DS), Asp84, and Lys112. Glu114 is a binding site for Mg(2+). Glu181 (proton acceptor) is an active-site residue.

The protein belongs to the PanB family. Homodecamer; pentamer of dimers. Mg(2+) is required as a cofactor.

It localises to the cytoplasm. It carries out the reaction 3-methyl-2-oxobutanoate + (6R)-5,10-methylene-5,6,7,8-tetrahydrofolate + H2O = 2-dehydropantoate + (6S)-5,6,7,8-tetrahydrofolate. It participates in cofactor biosynthesis; (R)-pantothenate biosynthesis; (R)-pantoate from 3-methyl-2-oxobutanoate: step 1/2. Catalyzes the reversible reaction in which hydroxymethyl group from 5,10-methylenetetrahydrofolate is transferred onto alpha-ketoisovalerate to form ketopantoate. In Pectobacterium atrosepticum (strain SCRI 1043 / ATCC BAA-672) (Erwinia carotovora subsp. atroseptica), this protein is 3-methyl-2-oxobutanoate hydroxymethyltransferase.